The chain runs to 95 residues: MAKTPENIAIDQLDKDQIKTFSDFLMSYNKLSETCFTDCIRDFTTRDVKDSEEKCSLNCMEKYLKMNQRVSQRFQEFQVIAHENALAMAQKTGKL.

The Twin CX3C motif signature appears at 35 to 59 (CFTDCIRDFTTRDVKDSEEKCSLNC). 2 disulfide bridges follow: Cys35–Cys59 and Cys39–Cys55.

The protein belongs to the small Tim family. Heterohexamer; composed of 3 copies of Tim9 and 3 copies of Tim10, named soluble 70 kDa complex. The complex associates with the Tim22 component of the TIM22 complex. Interacts with multi-pass transmembrane proteins in transit.

The protein localises to the mitochondrion inner membrane. Functionally, mitochondrial intermembrane chaperone that participates in the import and insertion of multi-pass transmembrane proteins into the mitochondrial inner membrane. May also be required for the transfer of beta-barrel precursors from the TOM complex to the sorting and assembly machinery (SAM complex) of the outer membrane. Acts as a chaperone-like protein that protects the hydrophobic precursors from aggregation and guide them through the mitochondrial intermembrane space. The chain is Mitochondrial import inner membrane translocase subunit Tim9 (Tim9a) from Drosophila melanogaster (Fruit fly).